The following is a 967-amino-acid chain: Leucine--tRNA ligase (967 aa).

Positions 43–53 match the 'HIGH' region motif; it reads PYLSGHLHVGH. A 'KMSKS' region motif is present at residues 650–654; that stretch reads KMSKS. Residue K653 coordinates ATP.

This sequence belongs to the class-I aminoacyl-tRNA synthetase family.

Its subcellular location is the cytoplasm. It catalyses the reaction tRNA(Leu) + L-leucine + ATP = L-leucyl-tRNA(Leu) + AMP + diphosphate. The protein is Leucine--tRNA ligase of Pyrococcus furiosus (strain ATCC 43587 / DSM 3638 / JCM 8422 / Vc1).